A 476-amino-acid polypeptide reads, in one-letter code: MKILFVAAEGAPFAKTGGLGDVIGALPKSLVKNNNEVSVILPYYDVVDAKFGDQIEDLFYFFTNVGWRREYVGIKHIFRDGVDFYFIDNKHYFYRGQIYGEFDDGERFAYFQLAALEAMEKIQFIPDILHVHDYHTAMIPYLLKEKYHWINAYHGIKTVFTIHNIEFQGQFNPSMLGELFGVGDERYRDGTLRWNDCLNWMKAAVLYADRVTTVSPSYAKEIMTPEFGKGLDQIMRMESGKLSGVVNGIDTDLFDPETDPHLAVHFSKDDLSGKAKNKAALQERVGLPVREDVPLVGIVSRLTDQKGFQLVVDQLNTMMQLDLQIVLLGTGYADFENAFAWFGHAYPDKMSANITFDLELAQQIYAASDIFLMPSAFEPCGLSQMMAMRYGTLPLVHEVGGLRDTVIPYNEFEKTGTGFGFQDFSGYWLTKTLEAALDVYYNRKEDWKILQKNAMTTDFSWDTASQSYEHLYKELA.

ADP-alpha-D-glucose is bound at residue Lys15.

This sequence belongs to the glycosyltransferase 1 family. Bacterial/plant glycogen synthase subfamily.

The catalysed reaction is [(1-&gt;4)-alpha-D-glucosyl](n) + ADP-alpha-D-glucose = [(1-&gt;4)-alpha-D-glucosyl](n+1) + ADP + H(+). It participates in glycan biosynthesis; glycogen biosynthesis. Functionally, synthesizes alpha-1,4-glucan chains using ADP-glucose. This chain is Glycogen synthase, found in Streptococcus mutans serotype c (strain ATCC 700610 / UA159).